The sequence spans 60 residues: Ixodegrin-like peptide (60 aa).

Residues 1–19 form the signal peptide; sequence MNAVFIAALLILGTSTFDA. The short motif at 49-51 is the Cell attachment site element; it reads RGD.

It belongs to the ixodegrin family. In terms of processing, contains 3 disulfide bonds. In terms of tissue distribution, expressed in salivary glands.

Its subcellular location is the secreted. Tick salivary platelet aggregation inhibitor that plays an important part in the anti-hemostatic strategy of ticks. Inhibits platelet aggregation induced by ADP, thrombin and thromboxane A2 (TXA2). Blocks platelet adhesion to soluble collagen (most probably through the binding to alpha-2/beta-1 integrin (ITGA2/ITGB1)) and binds to purified glycoprotein IIb/IIIa (ITGA2B/ITGB3) in a dose-dependent manner. In vivo, reduces thrombus weight effectively in a rat arteriovenous shunt model and inhibits thrombosis in a carrageenan-induced mouse tail thrombosis model. The polypeptide is Ixodegrin-like peptide (Ixodes scapularis (Black-legged tick)).